Consider the following 93-residue polypeptide: Large ribosomal subunit protein uL23 (93 aa).

It belongs to the universal ribosomal protein uL23 family. In terms of assembly, part of the 50S ribosomal subunit. Contacts protein L29, and trigger factor when it is bound to the ribosome.

One of the early assembly proteins it binds 23S rRNA. One of the proteins that surrounds the polypeptide exit tunnel on the outside of the ribosome. Forms the main docking site for trigger factor binding to the ribosome. This Campylobacter hominis (strain ATCC BAA-381 / DSM 21671 / CCUG 45161 / LMG 19568 / NCTC 13146 / CH001A) protein is Large ribosomal subunit protein uL23.